The following is a 101-amino-acid chain: Small ribosomal subunit protein uS14 (101 aa).

The segment at 1 to 20 is disordered; that stretch reads MAKISAVERNKKRERLTKRD.

The protein belongs to the universal ribosomal protein uS14 family. Part of the 30S ribosomal subunit. Contacts proteins S3 and S10.

In terms of biological role, binds 16S rRNA, required for the assembly of 30S particles and may also be responsible for determining the conformation of the 16S rRNA at the A site. The polypeptide is Small ribosomal subunit protein uS14 (Rhodospirillum rubrum (strain ATCC 11170 / ATH 1.1.1 / DSM 467 / LMG 4362 / NCIMB 8255 / S1)).